A 719-amino-acid polypeptide reads, in one-letter code: T-cell immunomodulatory protein homolog (719 aa).

The N-terminal stretch at 1-32 (MYNFLSCKKKSIILQVLLIICTYNILLNFVNI) is a signal peptide. At 33–677 (FVNNNEKNHK…LSVNPSKKFY (645 aa)) the chain is on the extracellular side. 5 N-linked (GlcNAc...) asparagine glycosylation sites follow: asparagine 144, asparagine 277, asparagine 410, asparagine 540, and asparagine 659. The chain crosses the membrane as a helical span at residues 678-697 (SILYITLICLSVIGVLIFIL). Residues 698–719 (DRKEKVEDSKEELGFKSHFVIG) are Cytoplasmic-facing.

The protein belongs to the TIP family.

The protein resides in the membrane. Functionally, may protect the parasite against attack by the host immune system by immunomodulation. This chain is T-cell immunomodulatory protein homolog, found in Plasmodium falciparum (isolate 3D7).